Consider the following 82-residue polypeptide: Diptericin-A (82 aa).

Disordered stretches follow at residues 1 to 32 and 45 to 69; these read DEKP…DGFG and DNGG…GNSR. Phenylalanine 82 is subject to Phenylalanine amide.

It belongs to the attacin/sarcotoxin-2 family.

The protein resides in the secreted. Its function is as follows. Antimicrobial peptide required to resist Gram-negative bacterial infections, regulated by Dredd. The sequence is that of Diptericin-A from Protophormia terraenovae (Northern blowfly).